A 411-amino-acid chain; its full sequence is Arginine deiminase (411 aa).

Cys-399 acts as the Amidino-cysteine intermediate in catalysis.

This sequence belongs to the arginine deiminase family.

Its subcellular location is the cytoplasm. The catalysed reaction is L-arginine + H2O = L-citrulline + NH4(+). Its pathway is amino-acid degradation; L-arginine degradation via ADI pathway; carbamoyl phosphate from L-arginine: step 1/2. This chain is Arginine deiminase, found in Latilactobacillus sakei subsp. sakei (strain 23K) (Lactobacillus sakei subsp. sakei).